The following is a 158-amino-acid chain: Complexin-3 (158 aa).

The disordered stretch occupies residues 14 to 47 (KNLTGSLGGGEDKGDGDKSAAEAQGMSREEYEEY). Over residues 23–33 (GEDKGDGDKSA) the composition is skewed to basic and acidic residues. A coiled-coil region spans residues 39 to 74 (MSREEYEEYQKQLVEEKMERDAQFTQRKAERATLRS). The residue at position 155 (cysteine 155) is a Cysteine methyl ester. Cysteine 155 carries S-farnesyl cysteine lipidation. A propeptide spans 156–158 (HIM) (removed in mature form).

Belongs to the complexin/synaphin family. In terms of assembly, binds to the SNARE core complex containing SNAP25, VAMP2 and STX1A. In terms of processing, farnesylation mediates presynaptic targeting. In terms of tissue distribution, present in many brain regions, including hippocampus and cerebellum (at protein level). Expressed in the retina (at protein level). Expressed in retinal amacrine cells (at protein level). Expressed in retinal photoreceptor ribbon synapses. Expressed in the retinal inner nuclear layer, at bipolar cells (at protein level). Expressed in cone photoreceptor synaptic terminals (at protein level).

It is found in the synapse. It localises to the cell membrane. Functionally, complexin that regulates SNARE protein complex-mediated synaptic vesicle fusion. Required for the maintenance of synaptic ultrastructure in the adult retina. Positively regulates synaptic transmission through synaptic vesicle availability and exocytosis of neurotransmitters at photoreceptor ribbon synapses in the retina. Suppresses tonic photoreceptor activity and baseline 'noise' by suppression of Ca(2+) vesicle tonic release and the facilitation of evoked synchronous and asynchronous Ca(2+) vesicle release. The polypeptide is Complexin-3 (Cplx3) (Mus musculus (Mouse)).